Here is a 32-residue protein sequence, read N- to C-terminus: Fimbrin sef21 (32 aa).

It localises to the fimbrium. The protein is Fimbrin sef21 of Salmonella enteritidis.